The primary structure comprises 173 residues: NADH-ubiquinone oxidoreductase chain 6 (173 aa).

5 helical membrane passes run 1-21 (MTYL…AVAS), 24-44 (APYF…GVLV), 53-73 (LVLF…SAAL), 87-107 (VLGY…LFWG), and 141-161 (GGML…VLEL).

It belongs to the complex I subunit 6 family.

It is found in the mitochondrion membrane. The enzyme catalyses a ubiquinone + NADH + 5 H(+)(in) = a ubiquinol + NAD(+) + 4 H(+)(out). Its function is as follows. Core subunit of the mitochondrial membrane respiratory chain NADH dehydrogenase (Complex I) that is believed to belong to the minimal assembly required for catalysis. Complex I functions in the transfer of electrons from NADH to the respiratory chain. The immediate electron acceptor for the enzyme is believed to be ubiquinone. In Oncorhynchus mykiss (Rainbow trout), this protein is NADH-ubiquinone oxidoreductase chain 6 (MT-ND6).